A 650-amino-acid chain; its full sequence is Acetoacetyl-coenzyme A synthetase (650 aa).

A CoA-binding site is contributed by 199–202 (YNGK). Residues 392–394 (GSP), Asp504, Arg519, and Arg530 each bind ATP. Val546 serves as a coordination point for Mg(2+). Arg587 serves as a coordination point for CoA. The residue at position 612 (Lys612) is an N6-acetyllysine.

It belongs to the ATP-dependent AMP-binding enzyme family. Requires Mg(2+) as cofactor. In terms of processing, acetylated. Deacetylation by the SIR2-homolog deacetylase activates the enzyme.

It carries out the reaction acetoacetate + ATP + CoA = acetoacetyl-CoA + AMP + diphosphate. It participates in biopolymer metabolism; poly-(R)-3-hydroxybutanoate degradation. Its function is as follows. Catalyzes the conversion of acetoacetate into acetoacetyl-CoA. Is involved in poly-3-hydroxybutyrate (PHB) degradation, which allows growth of R.meliloti on PHB cycle intermediates. The polypeptide is Acetoacetyl-coenzyme A synthetase (Rhizobium meliloti (strain 1021) (Ensifer meliloti)).